The primary structure comprises 43 residues: Protein PsbN (43 aa).

A helical transmembrane segment spans residues 5-27; it reads TLVAIFISCLLVSFTGYAPYTAS.

This sequence belongs to the PsbN family.

The protein localises to the plastid. It is found in the chloroplast thylakoid membrane. Functionally, may play a role in photosystem I and II biogenesis. The sequence is that of Protein PsbN from Anthoceros angustus (Hornwort).